Here is a 361-residue protein sequence, read N- to C-terminus: DNA replication and repair protein RecF (361 aa).

ATP is bound at residue 30-37 (GPNGSGKT).

Belongs to the RecF family.

The protein resides in the cytoplasm. In terms of biological role, the RecF protein is involved in DNA metabolism; it is required for DNA replication and normal SOS inducibility. RecF binds preferentially to single-stranded, linear DNA. It also seems to bind ATP. This is DNA replication and repair protein RecF from Yersinia enterocolitica serotype O:8 / biotype 1B (strain NCTC 13174 / 8081).